Here is a 70-residue protein sequence, read N- to C-terminus: Disintegrin triflavin (70 aa).

A Disintegrin domain is found at glycine 1–leucine 70. Intrachain disulfides connect cysteine 4–cysteine 19, cysteine 6–cysteine 14, cysteine 13–cysteine 36, cysteine 27–cysteine 33, cysteine 32–cysteine 57, and cysteine 45–cysteine 64. The short motif at arginine 49–aspartate 51 is the Cell attachment site element.

Belongs to the venom metalloproteinase (M12B) family. P-II subfamily. P-IIa sub-subfamily. As to quaternary structure, monomer. As to expression, expressed by the venom gland.

The protein resides in the secreted. Inhibits fibrinogen interaction with platelets. Acts by binding to alpha-IIb/beta-3 (ITGA2B/ITGB3) on the platelet surface and inhibits aggregation induced by ADP, thrombin, platelet-activating factor and collagen. This Protobothrops flavoviridis (Habu) protein is Disintegrin triflavin.